The sequence spans 1918 residues: NFX1-type zinc finger-containing protein 1 (1918 aa).

Basic and acidic residues predominate over residues 1–12; the sequence is MEERRPHLDARP. Disordered stretches follow at residues 1–58 and 75–140; these read MEER…RANN and RNPH…QPQQ. A compositionally biased stretch (low complexity) spans 30–42; it reads RARNQANNPPANA. Basic and acidic residues predominate over residues 82–105; it reads RNQEGHASDEARDQRHDQENDTRW. Positions 120 to 129 are enriched in polar residues; the sequence is SNDNFQQWRT. Residues 286–313 adopt a coiled-coil conformation; the sequence is DIEEETEKNLEKVQTIIEHLQEKRREGT. Disordered stretches follow at residues 796 to 819 and 876 to 896; these read SVSP…GEEE and TAAG…QKKK. Residues 809 to 819 are compositionally biased toward acidic residues; that stretch reads EGDEEEEGEEE. The segment covering 877-887 has biased composition (polar residues); the sequence is AAGQEQATGEW. Positions 886-967 form a coiled coil; that stretch reads EWQTQRNQKK…TSAERMAELR (82 aa). 6 consecutive NF-X1-type zinc fingers follow at residues 1298 to 1320, 1330 to 1346, 1382 to 1400, 1441 to 1463, 1471 to 1488, and 1546 to 1564; these read CGHV…QCMK, GHRC…PCQV, CGHR…LCSE, CGHP…RCQQ, CSHK…PCQR, and CGHP…KCRI. Positions 1741–1820 form a coiled coil; the sequence is LAKKRLSFTS…EKMEALKATL (80 aa). The RZ-type zinc finger occupies 1827–1898; the sequence is ISEEERVQIV…LASEMDGAQH (72 aa). Zn(2+) contacts are provided by Cys1849, His1853, Cys1869, and Cys1872.

This sequence belongs to the ZNFX1 family. In terms of assembly, interacts with MAVS. Widely expressed.

The protein resides in the mitochondrion outer membrane. The protein localises to the cytoplasm. Its subcellular location is the stress granule. Its function is as follows. RNA-binding protein that initiates the antiviral response and is required to restrict the replication of RNA viruses. Acts as a double-stranded RNA (dsRNA) sensor that recognizes viral RNA and then interacts with MAVS to initiate the type I interferon response. Also required for immunity against some bacteria, such as mycobacteria. The polypeptide is NFX1-type zinc finger-containing protein 1 (Homo sapiens (Human)).